The chain runs to 470 residues: MDSQYETKKNDPNAIMPYPESNDEHVGEVRGLGGGIMDKEPEAQEGHAKFHRLGWKRLTVVLIVEAIALGSLSLPGAFATLGMVPGVILSVGMGLICIYTAHVIGQTKLKHPEIAHYADVGRVMFGRWGYEIISFMFVLQLIFIVGSHVLTGTIMWGTITDNGNGTCSLVFGIVSAIILFLLAIPPSFAEVAILGYIDFVSICAAILITMIATGIRSSHQEGGLAAVPWSCWPKEDLSLAEGFIAVSNIVFAYSFAMCQFSFMDEMHTPSDYKKSIVALGLIEIFIYTVTGGVVYAFVGPEVQSPALLSAGPLLAKVAFGIALPVIFISGSINTVVVSRYLIERIWPNNVIRYVNTPAGWMVWLGFDFGITLIAWVIAEAIPFFSDLLAICSALFISGFSFYFPALMYFKITRNDAKSQGKKYFLDALNMLCFVIGMGILGIGTYAAIQDIMDRYDHGKVSKPYSCAPLA.

The span at 1-11 (MDSQYETKKND) shows a compositional bias: basic and acidic residues. The segment at 1–21 (MDSQYETKKNDPNAIMPYPES) is disordered. Residues 1 to 56 (MDSQYETKKNDPNAIMPYPESNDEHVGEVRGLGGGIMDKEPEAQEGHAKFHRLGWK) are Extracellular-facing. A run of 2 helical transmembrane segments spans residues 57–77 (RLTV…LPGA) and 78–98 (FATL…LICI). At 99 to 131 (YTAHVIGQTKLKHPEIAHYADVGRVMFGRWGYE) the chain is on the extracellular side. A helical membrane pass occupies residues 132-152 (IISFMFVLQLIFIVGSHVLTG). Residues 153–168 (TIMWGTITDNGNGTCS) are Cytoplasmic-facing. Transmembrane regions (helical) follow at residues 169–189 (LVFG…PSFA) and 191–211 (VAIL…ITMI). Over 212–236 (ATGIRSSHQEGGLAAVPWSCWPKED) the chain is Cytoplasmic. A helical membrane pass occupies residues 237–257 (LSLAEGFIAVSNIVFAYSFAM). The Extracellular segment spans residues 258 to 275 (CQFSFMDEMHTPSDYKKS). A helical transmembrane segment spans residues 276–296 (IVALGLIEIFIYTVTGGVVYA). The Cytoplasmic portion of the chain corresponds to 297–316 (FVGPEVQSPALLSAGPLLAK). A helical membrane pass occupies residues 317 to 337 (VAFGIALPVIFISGSINTVVV). At 338-357 (SRYLIERIWPNNVIRYVNTP) the chain is on the extracellular side. The helical transmembrane segment at 358–378 (AGWMVWLGFDFGITLIAWVIA) threads the bilayer. The Cytoplasmic portion of the chain corresponds to 379 to 386 (EAIPFFSD). Residues 387–407 (LLAICSALFISGFSFYFPALM) traverse the membrane as a helical segment. The Extracellular portion of the chain corresponds to 408-427 (YFKITRNDAKSQGKKYFLDA). The helical transmembrane segment at 428–448 (LNMLCFVIGMGILGIGTYAAI) threads the bilayer. Over 449–470 (QDIMDRYDHGKVSKPYSCAPLA) the chain is Cytoplasmic.

It belongs to the amino acid/polyamine transporter 2 family.

Its subcellular location is the membrane. Required for the transport of neutral aliphatic and aromatic amino acids via the N system. This is N amino acid transport system protein (mtr) from Neurospora crassa (strain ATCC 24698 / 74-OR23-1A / CBS 708.71 / DSM 1257 / FGSC 987).